Reading from the N-terminus, the 120-residue chain is Large ribosomal subunit protein uL14 (120 aa).

It belongs to the universal ribosomal protein uL14 family. In terms of assembly, part of the 50S ribosomal subunit. Forms a cluster with proteins L3 and L19. In the 70S ribosome, L14 and L19 interact and together make contacts with the 16S rRNA in bridges B5 and B8.

Binds to 23S rRNA. Forms part of two intersubunit bridges in the 70S ribosome. This Dictyoglomus turgidum (strain DSM 6724 / Z-1310) protein is Large ribosomal subunit protein uL14.